Reading from the N-terminus, the 561-residue chain is Arginine--tRNA ligase (561 aa).

The 'HIGH' region signature appears at 129–139 (ANPTGPLHIGH).

This sequence belongs to the class-I aminoacyl-tRNA synthetase family. Monomer.

Its subcellular location is the cytoplasm. It carries out the reaction tRNA(Arg) + L-arginine + ATP = L-arginyl-tRNA(Arg) + AMP + diphosphate. The chain is Arginine--tRNA ligase from Geotalea uraniireducens (strain Rf4) (Geobacter uraniireducens).